Consider the following 425-residue polypeptide: Serine hydroxymethyltransferase (425 aa).

(6S)-5,6,7,8-tetrahydrofolate-binding positions include Leu-122 and 126–128; that span reads GHL. Lys-231 carries the post-translational modification N6-(pyridoxal phosphate)lysine. 355-357 provides a ligand contact to (6S)-5,6,7,8-tetrahydrofolate; sequence SPF.

This sequence belongs to the SHMT family. As to quaternary structure, homodimer. It depends on pyridoxal 5'-phosphate as a cofactor.

The protein localises to the cytoplasm. It carries out the reaction (6R)-5,10-methylene-5,6,7,8-tetrahydrofolate + glycine + H2O = (6S)-5,6,7,8-tetrahydrofolate + L-serine. Its pathway is one-carbon metabolism; tetrahydrofolate interconversion. It functions in the pathway amino-acid biosynthesis; glycine biosynthesis; glycine from L-serine: step 1/1. Catalyzes the reversible interconversion of serine and glycine with tetrahydrofolate (THF) serving as the one-carbon carrier. This reaction serves as the major source of one-carbon groups required for the biosynthesis of purines, thymidylate, methionine, and other important biomolecules. Also exhibits THF-independent aldolase activity toward beta-hydroxyamino acids, producing glycine and aldehydes, via a retro-aldol mechanism. This chain is Serine hydroxymethyltransferase, found in Rippkaea orientalis (strain PCC 8801 / RF-1) (Cyanothece sp. (strain PCC 8801)).